Reading from the N-terminus, the 561-residue chain is Arginine--tRNA ligase (561 aa).

A 'HIGH' region motif is present at residues 129–139 (ANPTGPLHVGH).

The protein belongs to the class-I aminoacyl-tRNA synthetase family. As to quaternary structure, monomer.

The protein localises to the cytoplasm. The catalysed reaction is tRNA(Arg) + L-arginine + ATP = L-arginyl-tRNA(Arg) + AMP + diphosphate. The polypeptide is Arginine--tRNA ligase (Polaromonas sp. (strain JS666 / ATCC BAA-500)).